We begin with the raw amino-acid sequence, 173 residues long: MPRTQRNDNFIDKSFTVMADIILKILPTNQKAKEAFVYYRDGMSAQADGEYAEALDNYEEALRLEENPNDRSYILYNMALIHASNGDHEKALGLYQEAIELNPKMPSALNNIAVIYHFQGEKAKEAGQEDDAENLFDKAAEYWKQAIRLAPNNYIEAQNWLKITGRSEMDVFF.

3 TPR repeats span residues 35 to 68 (AFVY…EENP), 72 to 105 (SYIL…NPKM), and 120 to 153 (GEKA…APNN).

This sequence belongs to the Ycf3 family.

The protein localises to the cellular thylakoid membrane. Its function is as follows. Essential for the assembly of the photosystem I (PSI) complex. May act as a chaperone-like factor to guide the assembly of the PSI subunits. This chain is Photosystem I assembly protein Ycf3, found in Synechocystis sp. (strain ATCC 27184 / PCC 6803 / Kazusa).